The chain runs to 500 residues: Recombining binding protein suppressor of hairless (500 aa).

Residues 1 to 30 (MDHTEGSPAEEPPAHAPSPGKFGERPPPKR) form a disordered region. DNA-binding stretches follow at residues 57 to 67 (QKSYGNEKRFF) and 165 to 170 (SKPSKK). Lys-175 is modified (N6-acetyllysine). Residues 192–197 (RLRSQT) are DNA-binding. The region spanning 355 to 445 (PVVESLQLNG…YSTSLTFTYT (91 aa)) is the IPT/TIG domain. Positions 465-481 (SSQVPPNESNTNSEGSY) are enriched in polar residues. The disordered stretch occupies residues 465 to 500 (SSQVPPNESNTNSEGSYTNASTNSTSVTSSTATVVS). The span at 482 to 500 (TNASTNSTSVTSSTATVVS) shows a compositional bias: low complexity.

This sequence belongs to the Su(H) family. As to quaternary structure, interacts with activated NOTCH1, NOTCH2 or NOTCH3. Interacts with MINT/SHARP. This interaction may mediate the recruitment of large corepressor complexes containing proteins such as HDAC1, HDAC2, NCOR2, SAP30, FHL1/KYOT2 and CIR1. Interacts with EP300, MAML1 and PTF1A. Interacts with RITA1/C12orf52, leading to nuclear export, prevent the interaction between RBPJ and NICD product and subsequent down-regulation of the Notch signaling pathway. Interacts with SNW1. Interacts with CHCHD2 and CXXC5. Interacts with BEND6 (via BEN domain). Interacts with NKAPL. Interacts with ZMIZ1. Interacts with RBM15. Interacts with L3MBTL3 and KDM1A; the interaction with KDM1A is weaker in the absence of L3MBTL3 and the interaction with L3MBTL3 is impaired by Notch-derived peptide containing the intracellular domain (NICD). In terms of assembly, (Microbial infection) Interacts with EBV EBNA2. Interacts with EBV EBNA3. Interacts with EBV EBNA4. Interacts with EBV EBNA6 (via N-terminus).

The protein resides in the nucleus. The protein localises to the cytoplasm. In terms of biological role, transcriptional regulator that plays a central role in Notch signaling, a signaling pathway involved in cell-cell communication that regulates a broad spectrum of cell-fate determinations. Acts as a transcriptional repressor when it is not associated with Notch proteins. When associated with some NICD product of Notch proteins (Notch intracellular domain), it acts as a transcriptional activator that activates transcription of Notch target genes. Probably represses or activates transcription via the recruitment of chromatin remodeling complexes containing histone deacetylase or histone acetylase proteins, respectively. Specifically binds to the immunoglobulin kappa-type J segment recombination signal sequence. Binds specifically to methylated DNA. Binds to the oxygen responsive element of COX4I2 and activates its transcription under hypoxia conditions (4% oxygen). Negatively regulates the phagocyte oxidative burst in response to bacterial infection by repressing transcription of NADPH oxidase subunits. The sequence is that of Recombining binding protein suppressor of hairless from Homo sapiens (Human).